Consider the following 479-residue polypeptide: GDP-fucose protein O-fucosyltransferase 3 (479 aa).

Residues 1 to 8 lie on the Cytoplasmic side of the membrane; sequence MVRIQRRK. Residues 9 to 31 traverse the membrane as a helical; Signal-anchor for type II membrane protein segment; that stretch reads LLASCLCVTATVFLLVTLQVMVE. Residues 32-479 are Lumenal-facing; that stretch reads LGKFERKEFK…QEFWGLVFKD (448 aa). N-linked (GlcNAc...) asparagine glycosylation is found at N110 and N168. C389 and C392 form a disulfide bridge.

This sequence belongs to the glycosyltransferase 10 family. As to expression, expressed in lung, digestive tract, gall bladder, placenta, kidney, uterus and brain. Not detected in spleen, heart, muscle, liver and pancreas.

It is found in the endoplasmic reticulum membrane. The protein resides in the golgi apparatus membrane. It localises to the golgi apparatus. The protein localises to the lysosome. The enzyme catalyses L-threonyl-[protein] + GDP-beta-L-fucose = 3-O-(alpha-L-fucosyl)-L-threonyl-[protein] + GDP + H(+). The catalysed reaction is L-seryl-[protein] + GDP-beta-L-fucose = 3-O-(alpha-L-fucosyl)-L-seryl-[protein] + GDP + H(+). Its pathway is protein modification; protein glycosylation. In terms of biological role, protein O-fucosyltransferase that specifically catalyzes O-fucosylation of serine or threonine residues in EMI domains of target proteins, such as MMRN1, MMRN2 and EMID1. Attaches fucose through an O-glycosidic linkage. O-fucosylation of EMI domain-containing proteins may be required for facilitating protein folding and secretion. May also show alpha-(1,3)-fucosyltransferase activity toward the innermost N-acetyl glucosamine (GlcNAc) residue in biantennary N-glycan acceptors. However, this was tested with a library of synthetic substrates and this activity is unsure in vivo. May be involved in biosynthesis of Lewis X-carrying biantennary N-glycans that regulate neuron stem cell self-renewal during brain development. This is GDP-fucose protein O-fucosyltransferase 3 from Homo sapiens (Human).